The primary structure comprises 113 residues: Large ribosomal subunit protein uL22 (113 aa).

Belongs to the universal ribosomal protein uL22 family. Part of the 50S ribosomal subunit.

Its function is as follows. This protein binds specifically to 23S rRNA; its binding is stimulated by other ribosomal proteins, e.g. L4, L17, and L20. It is important during the early stages of 50S assembly. It makes multiple contacts with different domains of the 23S rRNA in the assembled 50S subunit and ribosome. The globular domain of the protein is located near the polypeptide exit tunnel on the outside of the subunit, while an extended beta-hairpin is found that lines the wall of the exit tunnel in the center of the 70S ribosome. The sequence is that of Large ribosomal subunit protein uL22 from Opitutus terrae (strain DSM 11246 / JCM 15787 / PB90-1).